The following is a 511-amino-acid chain: Cytochrome P450 26B1 (511 aa).

A heme-binding site is contributed by C440.

Belongs to the cytochrome P450 family. Heme is required as a cofactor.

It is found in the endoplasmic reticulum membrane. It localises to the microsome membrane. The enzyme catalyses all-trans-retinoate + reduced [NADPH--hemoprotein reductase] + O2 = all-trans-4-hydroxyretinoate + oxidized [NADPH--hemoprotein reductase] + H2O + H(+). It catalyses the reaction all-trans-retinoate + reduced [NADPH--hemoprotein reductase] + O2 = all-trans-18-hydroxyretinoate + oxidized [NADPH--hemoprotein reductase] + H2O + H(+). In terms of biological role, a cytochrome P450 monooxygenase involved in the metabolism of retinoates (RAs), the active metabolites of vitamin A, and critical signaling molecules in animals. RAs exist as at least four different isomers: all-trans-RA (atRA), 9-cis-RA, 13-cis-RA, and 9,13-dicis-RA, where atRA is considered to be the biologically active isomer, although 9-cis-RA and 13-cis-RA also have activity. Catalyzes the hydroxylation of atRA primarily at C-4 and C-18, thereby contributing to the regulation of atRA homeostasis and signaling. Hydroxylation of atRA limits its biological activity and initiates a degradative process leading to its eventual elimination. Involved in the convertion of atRA to all-trans-4-oxo-RA. Can oxidize all-trans-13,14-dihydroretinoate (DRA) to metabolites which could include all-trans-4-oxo-DRA, all-trans-4-hydroxy-DRA, all-trans-5,8-epoxy-DRA, and all-trans-18-hydroxy-DRA. The polypeptide is Cytochrome P450 26B1 (cyp26b1) (Xenopus tropicalis (Western clawed frog)).